The primary structure comprises 97 residues: YcgL domain-containing protein Tcr_0238 (97 aa).

The 85-residue stretch at L3 to P87 folds into the YcgL domain. The interval S78–F97 is disordered.

This is YcgL domain-containing protein Tcr_0238 from Hydrogenovibrio crunogenus (strain DSM 25203 / XCL-2) (Thiomicrospira crunogena).